A 144-amino-acid polypeptide reads, in one-letter code: Large ribosomal subunit protein uL11 (144 aa).

The protein belongs to the universal ribosomal protein uL11 family. As to quaternary structure, part of the ribosomal stalk of the 50S ribosomal subunit. Interacts with L10 and the large rRNA to form the base of the stalk. L10 forms an elongated spine to which L12 dimers bind in a sequential fashion forming a multimeric L10(L12)X complex. One or more lysine residues are methylated.

Functionally, forms part of the ribosomal stalk which helps the ribosome interact with GTP-bound translation factors. The chain is Large ribosomal subunit protein uL11 from Francisella tularensis subsp. holarctica (strain OSU18).